A 497-amino-acid chain; its full sequence is Carboxylesterase (497 aa).

The Acyl-ester intermediate role is filled by Ser-185. Catalysis depends on charge relay system residues Glu-319 and His-415.

It belongs to the type-B carboxylesterase/lipase family.

Its subcellular location is the secreted. The catalysed reaction is a carboxylic ester + H2O = an alcohol + a carboxylate + H(+). The sequence is that of Carboxylesterase from Thermobifida fusca (Thermomonospora fusca).